Reading from the N-terminus, the 846-residue chain is Auxin response factor 2A (846 aa).

Residues 1-12 (MAASEVSIQGYS) are compositionally biased toward polar residues. The tract at residues 1–30 (MAASEVSIQGYSEPSDGSRPVSETGRSSSG) is disordered. Positions 146–248 (FCKTLTASDT…ELRVGVRRAM (103 aa)) form a DNA-binding region, TF-B3. Disordered stretches follow at residues 380–423 (PPAL…HSQA) and 660–693 (DMNI…GVAA). Polar residues-rich tracts occupy residues 398–408 (ILPTSPDSSVL) and 414–423 (SRATADHSQA). The span at 675-693 (SDQRSEQSKGSKVDDGVAA) shows a compositional bias: basic and acidic residues. The PB1 domain maps to 720-804 (RSCTKVHKQG…RKIFIYTKEE (85 aa)). Composition is skewed to polar residues over residues 809–824 (NPGT…SSVA) and 836–846 (QLPSESGQAES). The disordered stretch occupies residues 809–846 (NPGTLNSKGEDTSSVAEGSDAKEVKNLQLPSESGQAES).

The protein belongs to the ARF family. In terms of assembly, homodimers and heterodimers. Interacts with ASR1. As to expression, expressed in root, leaf and flower. Expressed in flower buds about three days before opening including ovary, petal and sepal with the highest in stamen. Expressed in stem. Expressed in fruit. Expressed in seeds.

Its subcellular location is the nucleus. Auxin response factors (ARFs) are transcriptional factors that bind specifically to the DNA sequence 5'-TGTCTC-3' found in the auxin-responsive promoter elements (AuxREs). Could act as transcriptional activator or repressor. Involved in the control of fruit ripening process. Regulates expression of a number of ripening regulators, transcription factors, and ethylene biosynthesis and signaling components. May act as a transcriptional repressor of auxin-responsive genes. Regulates vegetative growth, lateral root formation and flower organ senescence, possibly partially by regulating gene expression of auxin and ethylene response factor (ERF) genes. Plays a negative role in axillary shoot meristem formation. This is Auxin response factor 2A from Solanum lycopersicum (Tomato).